The primary structure comprises 159 residues: Phosphopantetheine adenylyltransferase (159 aa).

Thr-10 provides a ligand contact to substrate. Residues 10–11 and His-18 each bind ATP; that span reads TF. Substrate-binding residues include Lys-42, Met-74, and Arg-88. Residues 89-91, Glu-99, and 124-130 contribute to the ATP site; these read GLR and WSFISSS.

This sequence belongs to the bacterial CoaD family. As to quaternary structure, homohexamer. The cofactor is Mg(2+).

It localises to the cytoplasm. The enzyme catalyses (R)-4'-phosphopantetheine + ATP + H(+) = 3'-dephospho-CoA + diphosphate. The protein operates within cofactor biosynthesis; coenzyme A biosynthesis; CoA from (R)-pantothenate: step 4/5. Reversibly transfers an adenylyl group from ATP to 4'-phosphopantetheine, yielding dephospho-CoA (dPCoA) and pyrophosphate. The chain is Phosphopantetheine adenylyltransferase from Salmonella typhimurium (strain LT2 / SGSC1412 / ATCC 700720).